We begin with the raw amino-acid sequence, 354 residues long: Guanine nucleotide-binding protein alpha-3 subunit (354 aa).

A lipid anchor (N-myristoyl glycine) is attached at Gly2. Cys4 is lipidated: S-palmitoyl cysteine. A G-alpha domain is found at 33–354 (KECKILLLGS…TNALKDSGIL (322 aa)). The interval 36–49 (KILLLGSGESGKST) is G1 motif. Residues 41 to 48 (GSGESGKS), 177 to 183 (LRARSKT), 202 to 206 (DVGGQ), 271 to 274 (NKID), and Ala326 contribute to the GTP site. Ser48 and Thr183 together coordinate Mg(2+). Residues 175–183 (DVLRARSKT) are G2 motif. The segment at 198–207 (IHLFDVGGQR) is G3 motif. The interval 267 to 274 (ILFLNKID) is G4 motif. Residues 324-329 (TQATDT) are G5 motif.

This sequence belongs to the G-alpha family. G proteins are composed of 3 units; alpha, beta and gamma. The alpha chain contains the guanine nucleotide binding site.

Guanine nucleotide-binding proteins (G proteins) are involved as modulators or transducers in various transmembrane signaling systems. This subunit is involved in cAMP regulation and morphogenesis. It is essential for dimorphic switching in haploid cells. The polypeptide is Guanine nucleotide-binding protein alpha-3 subunit (FIL1) (Ustilago hordei (Barley covered smut fungus)).